A 273-amino-acid chain; its full sequence is SKA complex subunit 1 homolog (273 aa).

Residues 77–97 (KKLVQRSLKEEEKLQHMLANL) adopt a coiled-coil conformation.

It belongs to the SKA1 family.

The polypeptide is SKA complex subunit 1 homolog (Zea mays (Maize)).